A 517-amino-acid chain; its full sequence is GMP synthase [glutamine-hydrolyzing] (517 aa).

The Glutamine amidotransferase type-1 domain occupies 4 to 193; sequence KIIILDFGSQ…VVDICGGKQD (190 aa). Residue C79 is the Nucleophile of the active site. Catalysis depends on residues H167 and E169. Residues 194–382 form the GMPS ATP-PPase domain; that stretch reads WSAASFIETT…LGMPEHLITR (189 aa). ATP is bound at residue 221–227; it reads SGGVDSS.

Homodimer.

It carries out the reaction XMP + L-glutamine + ATP + H2O = GMP + L-glutamate + AMP + diphosphate + 2 H(+). It participates in purine metabolism; GMP biosynthesis; GMP from XMP (L-Gln route): step 1/1. Functionally, catalyzes the synthesis of GMP from XMP. This is GMP synthase [glutamine-hydrolyzing] from Phocaeicola vulgatus (strain ATCC 8482 / DSM 1447 / JCM 5826 / CCUG 4940 / NBRC 14291 / NCTC 11154) (Bacteroides vulgatus).